A 171-amino-acid chain; its full sequence is Small ribosomal subunit protein uS5 (171 aa).

In terms of domain architecture, S5 DRBM spans 15 to 78; sequence LKDRLVAINR…EAAKKNLTRV (64 aa).

This sequence belongs to the universal ribosomal protein uS5 family. As to quaternary structure, part of the 30S ribosomal subunit. Contacts proteins S4 and S8.

Its function is as follows. With S4 and S12 plays an important role in translational accuracy. Located at the back of the 30S subunit body where it stabilizes the conformation of the head with respect to the body. The polypeptide is Small ribosomal subunit protein uS5 (Phocaeicola vulgatus (strain ATCC 8482 / DSM 1447 / JCM 5826 / CCUG 4940 / NBRC 14291 / NCTC 11154) (Bacteroides vulgatus)).